The chain runs to 660 residues: Replication restart protein PriA (660 aa).

Positions 145–313 (IIGSEKTNVF…KNNQIKKIIM (169 aa)) constitute a Helicase ATP-binding domain. 158–165 (GIPGSGKT) provides a ligand contact to ATP. Positions 256–259 (DEEH) match the DEAH box motif. Zn(2+) is bound by residues C370, C373, C379, C382, C397, C400, C410, and C413. The 153-residue stretch at 405–557 (KTASHCPQCE…QFYEEELDIR (153 aa)) folds into the Helicase C-terminal domain.

It belongs to the helicase family. PriA subfamily. Component of the replication restart primosome. The cofactor is Zn(2+).

It carries out the reaction Couples ATP hydrolysis with the unwinding of duplex DNA by translocating in the 3'-5' direction.. The catalysed reaction is ATP + H2O = ADP + phosphate + H(+). In terms of biological role, initiates the restart of stalled replication forks, which reloads the replicative helicase on sites other than the origin of replication. Recognizes and binds to abandoned replication forks and remodels them to uncover a helicase loading site. Promotes assembly of the primosome at these replication forks. This chain is Replication restart protein PriA, found in Borreliella burgdorferi (strain ATCC 35210 / DSM 4680 / CIP 102532 / B31) (Borrelia burgdorferi).